The sequence spans 311 residues: HPr kinase/phosphorylase (311 aa).

Residues His-138 and Lys-159 contribute to the active site. 153–160 is a binding site for ATP; that stretch reads GDSGIGKS. Ser-160 contributes to the Mg(2+) binding site. Asp-177 acts as the Proton acceptor; for phosphorylation activity. Proton donor; for dephosphorylation activity in catalysis. Positions 201–210 are important for the catalytic mechanism of both phosphorylation and dephosphorylation; that stretch reads IEIRGVGIID. Residue Glu-202 coordinates Mg(2+). Arg-243 is an active-site residue. The segment at 264–269 is important for the catalytic mechanism of dephosphorylation; sequence PVKTGR.

It belongs to the HPrK/P family. In terms of assembly, homohexamer. Requires Mg(2+) as cofactor.

The catalysed reaction is [HPr protein]-L-serine + ATP = [HPr protein]-O-phospho-L-serine + ADP + H(+). It catalyses the reaction [HPr protein]-O-phospho-L-serine + phosphate + H(+) = [HPr protein]-L-serine + diphosphate. In terms of biological role, catalyzes the ATP- as well as the pyrophosphate-dependent phosphorylation of a specific serine residue in HPr, a phosphocarrier protein of the phosphoenolpyruvate-dependent sugar phosphotransferase system (PTS). HprK/P also catalyzes the pyrophosphate-producing, inorganic phosphate-dependent dephosphorylation (phosphorolysis) of seryl-phosphorylated HPr (P-Ser-HPr). The two antagonistic activities of HprK/P are regulated by several intracellular metabolites, which change their concentration in response to the absence or presence of rapidly metabolisable carbon sources (glucose, fructose, etc.) in the growth medium. Therefore, by controlling the phosphorylation state of HPr, HPrK/P is a sensor enzyme that plays a major role in the regulation of carbon metabolism and sugar transport: it mediates carbon catabolite repression (CCR), and regulates PTS-catalyzed carbohydrate uptake and inducer exclusion. In Streptococcus pneumoniae (strain 70585), this protein is HPr kinase/phosphorylase.